The chain runs to 317 residues: Protein-L-isoaspartate O-methyltransferase (317 aa).

Residue Ser59 is part of the active site.

This sequence belongs to the methyltransferase superfamily. L-isoaspartyl/D-aspartyl protein methyltransferase family. Monomer.

Its subcellular location is the cytoplasm. The enzyme catalyses [protein]-L-isoaspartate + S-adenosyl-L-methionine = [protein]-L-isoaspartate alpha-methyl ester + S-adenosyl-L-homocysteine. Catalyzes the methyl esterification of L-isoaspartyl residues in peptides and proteins that result from spontaneous decomposition of normal L-aspartyl and L-asparaginyl residues. It plays a role in the repair and/or degradation of damaged proteins. The polypeptide is Protein-L-isoaspartate O-methyltransferase (pcm) (Thermotoga maritima (strain ATCC 43589 / DSM 3109 / JCM 10099 / NBRC 100826 / MSB8)).